Reading from the N-terminus, the 219-residue chain is Small ribosomal subunit protein uS3 (219 aa).

Residues 38–106 (IREYINVRLK…RVHINILEVK (69 aa)) enclose the KH type-2 domain.

This sequence belongs to the universal ribosomal protein uS3 family. As to quaternary structure, part of the 30S ribosomal subunit. Forms a tight complex with proteins S10 and S14.

In terms of biological role, binds the lower part of the 30S subunit head. Binds mRNA in the 70S ribosome, positioning it for translation. The chain is Small ribosomal subunit protein uS3 from Bacillus thuringiensis (strain Al Hakam).